The primary structure comprises 355 residues: DNA-binding protein RHL1 (355 aa).

3 disordered regions span residues 1–26 (MVRASSSKKGGSKGGDKDDAESKQRK), 181–215 (DFQGGAGGAASVKKLASPEIGSQPTETDSPEVDNE), and 229–355 (IQVT…SSKA). Basic and acidic residues predominate over residues 14 to 23 (GGDKDDAESK). 2 stretches are compositionally biased toward low complexity: residues 230 to 246 (QVTPPVQLTPPVQVTPV) and 260 to 274 (AETSSEASSGESEGN). 2 stretches are compositionally biased toward basic and acidic residues: residues 281–296 (KPLLEPESSTRSREES) and 309–326 (LPEELPAKREKLKSKDSK). Positions 344-355 (AGTSKAKSSSKA) are enriched in low complexity.

Interacts with BIN4 and TOP6A, but not with TOP6B. As to expression, expressed inproliferating and endoreduplicating cells.

Its subcellular location is the nucleus. Functionally, component of the DNA topoisomerase VI complex involved in chromatin organization and progression of endoreduplication cycles. Binds to DNA. Required for endoreduplication beyond 8C. The polypeptide is DNA-binding protein RHL1 (RHL1) (Arabidopsis thaliana (Mouse-ear cress)).